Reading from the N-terminus, the 1092-residue chain is MEASAGLVAGSHNRNELVVIRRDGEPGPKPVKHTNGQVCQICGDDVGLTPDGEPFVACNECAFPVCRDCYEYERREGTQNCPQCKTRFKRLKGCARVPGDEEEEDVDDLENEFNWRDKTDSQYVAESMLHGHMSYGRGGDLDGVPQHFQPIPNVPLLTNGEMADDIPPEQHALVPSFMGGGGKRIHPLPYADPNLPVQPRSMDPSKDLAAYGYGSVAWKERMESWKQKQERLHQMRNDGGGKDWDGDGDDADLPLMDEARQPLSRKIPISSSLVNPYRMIIIIRLVVLGFFFHYRVMHPVPDAFALWLISVICEIWFAMSWILDQFPKWFPIERETYLDRLTLRFDKEGQQSQLAPVDFFVSTVDPMKEPPLVTANTVLSILAVDYPVDKVSCYVSDDGAAMLTFEALSETSEFAKKWVPFCKRYSLEPRAPEWYFQQKIDYLKDKVAPNFVRERRAMKREYEEFKVRINALVAKAQKVPEEGWTMQDGTPWPGNNVRDHPGMIQVFLGQSGGHDVEGNELPRLVYVSREKRPGYNHHKKAGAMNALVRVSAVLTNAPYMLNLDCDHYINNSKAIKEAMCFMMDPLVGKKVCYVQFPQRFDGIDRHDRYANRNVVFFDINMKGLDGIQGPIYVGTGCVFRRQALYGYDAPKSKKPPSRTCNCWPKWCICCCCFGNRTNKKKTAKPKTEKKKRLFFKRAENQSPAYALGEIDEGAPGAENEKAGIVNQQKLEKKFGQSSVFVASTLLENGGTLKSASPASLLKEAIHVISCGYEDKTDWGKEIGWIYGSVTEDILTGFKMHCHGWRSIYCIPKRAAFKGSAPLNLSDRLHQVLRWALGSIEIFFSNHCPLWYGYGGGLKCLERFSYINSIVYPWTSIPLLAYCTLPAICLLTGKFITPELTNIASLWFMSLFICIFATGILEMRWSGVGIDDWWRNEQFWVIGGVSSHLFAVFQGLLKVIAGIDTSFTVTSKGGDDEEFSELYTFKWTTLLIPPTTLLLLNFIGVVAGVSNAINNGYESWGPLFGKLFFAFWVIVHLYPFLKGLVGRQNRTPTIVIVWSILLASIFSLLWVRIDPFLAKNDGPLLEECGLDCN.

Topologically, residues 1 to 279 (MEASAGLVAG…SSSLVNPYRM (279 aa)) are cytoplasmic. Positions 39, 42, 58, 61, 66, 69, 81, and 84 each coordinate Zn(2+). The RING-type; degenerate zinc-finger motif lies at 39 to 85 (CQICGDDVGLTPDGEPFVACNECAFPVCRDCYEYERREGTQNCPQCK). The chain crosses the membrane as a helical span at residues 280–300 (IIIIRLVVLGFFFHYRVMHPV). Over 301–302 (PD) the chain is Extracellular. The helical transmembrane segment at 303–323 (AFALWLISVICEIWFAMSWIL) threads the bilayer. Topologically, residues 324–868 (DQFPKWFPIE…CLERFSYINS (545 aa)) are cytoplasmic. 4 residues coordinate UDP-alpha-D-glucose: serine 362, lysine 368, glutamate 369, and aspartate 398. Aspartate 398 is an active-site residue. The stretch at 450 to 479 (NFVRERRAMKREYEEFKVRINALVAKAQKV) forms a coiled coil. Lysine 539 provides a ligand contact to UDP-alpha-D-glucose. 2 residues coordinate Mn(2+): lysine 540 and aspartate 564. Residue aspartate 792 is part of the active site. The chain crosses the membrane as a helical span at residues 869–889 (IVYPWTSIPLLAYCTLPAICL). Over 890-901 (LTGKFITPELTN) the chain is Extracellular. A helical transmembrane segment spans residues 902–922 (IASLWFMSLFICIFATGILEM). Topologically, residues 923 to 938 (RWSGVGIDDWWRNEQF) are cytoplasmic. The chain crosses the membrane as a helical span at residues 939–959 (WVIGGVSSHLFAVFQGLLKVI). At 960–987 (AGIDTSFTVTSKGGDDEEFSELYTFKWT) the chain is on the extracellular side. The helical transmembrane segment at 988-1008 (TLLIPPTTLLLLNFIGVVAGV) threads the bilayer. Over 1009–1019 (SNAINNGYESW) the chain is Cytoplasmic. Residues 1020 to 1040 (GPLFGKLFFAFWVIVHLYPFL) form a helical membrane-spanning segment. The Extracellular portion of the chain corresponds to 1041–1049 (KGLVGRQNR). A helical transmembrane segment spans residues 1050–1070 (TPTIVIVWSILLASIFSLLWV). At 1071-1092 (RIDPFLAKNDGPLLEECGLDCN) the chain is on the cytoplasmic side.

Belongs to the glycosyltransferase 2 family. Plant cellulose synthase subfamily. Mn(2+) serves as cofactor. It depends on Zn(2+) as a cofactor.

The protein localises to the cell membrane. The enzyme catalyses [(1-&gt;4)-beta-D-glucosyl](n) + UDP-alpha-D-glucose = [(1-&gt;4)-beta-D-glucosyl](n+1) + UDP + H(+). It participates in glycan metabolism; plant cellulose biosynthesis. Functionally, probable catalytic subunit of cellulose synthase terminal complexes ('rosettes'), required for beta-1,4-glucan microfibril crystallization, a major mechanism of the cell wall formation. The sequence is that of Probable cellulose synthase A catalytic subunit 5 [UDP-forming] (CESA5) from Oryza sativa subsp. indica (Rice).